Reading from the N-terminus, the 162-residue chain is Small ribosomal subunit protein uS13 (162 aa).

The disordered stretch occupies residues 142–162; sequence RGQRTKSTGRRGSTVGVSRKK.

The protein belongs to the universal ribosomal protein uS13 family. In terms of assembly, part of the 30S ribosomal subunit. Forms a loose heterodimer with protein S19. Forms two bridges to the 50S subunit in the 70S ribosome.

Located at the top of the head of the 30S subunit, it contacts several helices of the 16S rRNA. In the 70S ribosome it contacts the 23S rRNA (bridge B1a) and protein L5 of the 50S subunit (bridge B1b), connecting the 2 subunits; these bridges are implicated in subunit movement. In Methanosarcina acetivorans (strain ATCC 35395 / DSM 2834 / JCM 12185 / C2A), this protein is Small ribosomal subunit protein uS13.